Consider the following 77-residue polypeptide: uncharacterized protein (77 aa).

This is an uncharacterized protein from Acidianus ambivalens (Desulfurolobus ambivalens).